The primary structure comprises 446 residues: Sorting nexin-30 (446 aa).

Residues 1–18 (MSGSSTPKSLPTSGQQSL) show a composition bias toward polar residues. Residues 1–84 (MSGSSTPKSL…SSPASSSSLL (84 aa)) are disordered. A compositionally biased stretch (low complexity) spans 70–84 (TPADTSSPASSSSLL). The PX domain maps to 98-219 (RDLFVTVDDP…VFLTAKDLNS (122 aa)). Residues arginine 141, glutamine 143, lysine 171, and arginine 185 each coordinate a 1,2-diacyl-sn-glycero-3-phospho-(1D-myo-inositol-3-phosphate). Residues 243–446 (KLRNRPVEFA…PLLQDKQEPK (204 aa)) form the BAR domain.

The protein belongs to the sorting nexin family.

The protein localises to the early endosome membrane. Functionally, involved in the regulation of endocytosis and in several stages of intracellular trafficking. Together with snx4, involved in autophagosome assembly. The polypeptide is Sorting nexin-30 (snx30) (Xenopus tropicalis (Western clawed frog)).